Reading from the N-terminus, the 77-residue chain is Conotoxin VnMEKL-0223 (77 aa).

The first 19 residues, 1–19 (MQKLTILLLVAAVLMSTQA), serve as a signal peptide directing secretion. A propeptide spanning residues 20 to 37 (LIKGGGEKRPKEKIKFLS) is cleaved from the precursor. 3 disulfides stabilise this stretch: cysteine 51–cysteine 65, cysteine 58–cysteine 69, and cysteine 64–cysteine 74.

This sequence belongs to the conotoxin O2 superfamily. Expressed by the venom duct.

The protein localises to the secreted. The sequence is that of Conotoxin VnMEKL-0223 from Conus ventricosus (Mediterranean cone).